The sequence spans 244 residues: Serine-rich single-pass membrane protein 1 (244 aa).

Residues 35-55 (CGTIGSFLLWYFVIVFVLMFF) traverse the membrane as a helical segment. 3 disordered regions span residues 65-114 (DKKD…PVTN), 126-191 (QRRA…LGSY), and 210-244 (LAHHSRQKPSVTPPMKRDSQEESSISDINKKFSKF). The span at 80–94 (ASKETSCKRQSKDSA) shows a compositional bias: basic and acidic residues. Polar residues-rich tracts occupy residues 96-114 (DPSQTMKKPKQNQLTPVTN) and 132-142 (QSQFNEVNQNQ). A compositionally biased stretch (basic and acidic residues) spans 161-176 (SWKESESEHHPSPDSI).

The protein localises to the membrane. In Homo sapiens (Human), this protein is Serine-rich single-pass membrane protein 1 (SSMEM1).